Consider the following 607-residue polypeptide: Elongation factor 4 (607 aa).

The tr-type G domain maps to 11–193 (SKIRNFSIIA…QIVEKVPAPT (183 aa)). GTP contacts are provided by residues 23-28 (DHGKST) and 140-143 (NKID).

This sequence belongs to the TRAFAC class translation factor GTPase superfamily. Classic translation factor GTPase family. LepA subfamily.

The protein resides in the cell membrane. It catalyses the reaction GTP + H2O = GDP + phosphate + H(+). Its function is as follows. Required for accurate and efficient protein synthesis under certain stress conditions. May act as a fidelity factor of the translation reaction, by catalyzing a one-codon backward translocation of tRNAs on improperly translocated ribosomes. Back-translocation proceeds from a post-translocation (POST) complex to a pre-translocation (PRE) complex, thus giving elongation factor G a second chance to translocate the tRNAs correctly. Binds to ribosomes in a GTP-dependent manner. The polypeptide is Elongation factor 4 (Bacillus anthracis (strain A0248)).